The primary structure comprises 117 residues: uncharacterized protein (117 aa).

The chain crosses the membrane as a helical span at residues 76–96; sequence FIMSSGCFLIASLSCVGLTVF.

The protein localises to the membrane. This is an uncharacterized protein from Saccharomyces cerevisiae (strain ATCC 204508 / S288c) (Baker's yeast).